A 443-amino-acid chain; its full sequence is KH domain-containing, RNA-binding, signal transduction-associated protein 1 (443 aa).

Residues 1–94 (MQRRDDPASR…PLLPPSATAA (94 aa)) are disordered. S18 and S20 each carry phosphoserine. K21 carries the post-translational modification N6-acetyllysine. S29 carries the phosphoserine modification. T33 carries the phosphothreonine modification. 2 positions are modified to asymmetric dimethylarginine; by PRMT1: R45 and R52. S58 bears the Phosphoserine; by MAPK1 mark. The span at 61-72 (TQPPPLLPPSTP) shows a compositional bias: pro residues. Phosphothreonine; by MAPK1 is present on residues T71 and T84. Low complexity predominate over residues 81–94 (SAPTPLLPPSATAA). Glycyl lysine isopeptide (Lys-Gly) (interchain with G-Cter in SUMO2) cross-links involve residues K96 and K102. Residues 100 to 260 (ENKYLPELMA…VKKFLVPDMM (161 aa)) are involved in homodimerization. S113 is modified (phosphoserine). K139 participates in a covalent cross-link: Glycyl lysine isopeptide (Lys-Gly) (interchain with G-Cter in SUMO2). S150 carries the post-translational modification Phosphoserine. The KH domain maps to 171–197 (NFVGKILGPQGNTIKRLQEETGAKISV). Position 175 is an N6-acetyllysine; alternate (K175). K175 is covalently cross-linked (Glycyl lysine isopeptide (Lys-Gly) (interchain with G-Cter in SUMO2); alternate). T183 is modified (phosphothreonine). The disordered stretch occupies residues 280 to 317 (PSRGRGVSVRGRGAAPPPPPVPRGRGVGPPRGALVRGT). Residues R282, R284, and R291 each carry the omega-N-methylarginine modification. Residues 283–293 (GRGVSVRGRGA) show a composition bias toward low complexity. Position 304 is an asymmetric dimethylarginine (R304). A compositionally biased stretch (low complexity) spans 307-316 (GPPRGALVRG). R310 and R315 each carry omega-N-methylarginine; by PRMT1. Residue R320 is modified to Dimethylated arginine; alternate. R320 is subject to Omega-N-methylarginine; by PRMT1; alternate. R325 carries the post-translational modification Omega-N-methylarginine; by PRMT1. A disordered region spans residues 326-345 (GATVTRGVPPPPTVRGAPTP). R331 and R340 each carry dimethylated arginine; alternate. Omega-N-methylarginine; by PRMT1; alternate occurs at positions 331 and 340. The residue at position 331 (R331) is an Asymmetric dimethylarginine; alternate. The tract at residues 351 to 443 (GIQRIPLPPT…AYREHPYGRY (93 aa)) is interaction with HNRNPA1. A Phosphotyrosine modification is found at Y387. A Phosphoserine modification is found at S390. The segment at 400-420 (GHGELQDSYEAYGQDDWNGTR) is interaction with ZBTB7A. A disordered region spans residues 411 to 443 (YGQDDWNGTRPSLKAPPARPVKGAYREHPYGRY). Residue K432 forms a Glycyl lysine isopeptide (Lys-Gly) (interchain with G-Cter in SUMO2) linkage. The span at 434 to 443 (AYREHPYGRY) shows a compositional bias: basic and acidic residues. 3 positions are modified to phosphotyrosine; by PTK6: Y435, Y440, and Y443.

It belongs to the KHDRBS family. As to quaternary structure, self-associates to form homooligomers when bound to RNA, oligomerization appears to be limited when binding to proteins. Forms a trimeric complex in the nucleus consisting of BANP, HDAC6 and KHDRBS1/SAM68; HDAC6 keeps KHDRBS1 in a deacetylated state which inhibits the inclusion of CD44 alternate exons. The complex is disrupted by MAPK1/MAPK3-mediated phosphorylation of BANP which results in BANP export to the cytoplasm. This facilitates acetylation of KHDRBS1 and CD44 variant exon inclusion. Interacts with KHDRBS3/SLIM-2 and KHDRBS2/SLIM-1; heterooligomer formation of KHDRBS family proteins may modulate RNA substrate specificity. Interacts with RASA1, FYN, GRB2, PLCG1, SRC, CBP and PRMT1. Interacts with PTK6 (via SH3 and SH2 domains). Forms a complex with ILF2, ILF3, YLPM1, RBMX, NCOA5 and PPP1CA. Binds WBP4/FBP21 (via WW domains), FNBP4/FBP30 (via WW domains). Interacts (via Arg/Gly-rich-flanked Pro-rich regions) with FYN (via the SH3 domain). Interacts with APC, HNRNPA1. Interacts with the non-receptor tyrosine kinase SRMS; the interaction leads to phosphorylation of KHDRBS1. Interacts with ZBTB7A; negatively regulates KHDRBS1 splicing activity toward BCL2L1. In terms of processing, tyrosine phosphorylated by several non-receptor tyrosine kinases including LCK, FYN and JAK3. Also tyrosine phosphorylated by the non-receptor tyrosine kinase SRMS in an EGF-dependent manner. Phosphorylation by PTK6 negatively regulates its RNA binding ability. Phosphorylation by PTK6 at Tyr-440 dictates the nuclear localization of KHDRBS1. Phosphorylation by MAPK1 at Ser-58, Thr-71 and Thr-84 regulates CD44 alternative splicing by promoting CD44 exon v5 inclusion. Post-translationally, acetylated. Positively correlates with ability to bind RNA. Deacetylated by HDAC6; this regulates alternative splicing by inhibiting the inclusion of CD44 alternate exons. Arginine methylation is required for nuclear localization. Inhibits interaction with Src-like SH3 domains, but not interaction with WW domains of WBP4/FBP21 and FNBP4/FBP30. In adult cerebellum expressed in most neuronal cell populations, specifically in cerebellar granule cells of the internal granular layer, ROR(alpha)-positive Purkinje cells, internal granular layer and molecular layer interneurons (at protein level).

It localises to the nucleus. The protein localises to the cytoplasm. It is found in the membrane. Functionally, recruited and tyrosine phosphorylated by several receptor systems, for example the T-cell, leptin and insulin receptors. Once phosphorylated, functions as an adapter protein in signal transduction cascades by binding to SH2 and SH3 domain-containing proteins. Role in G2-M progression in the cell cycle. Represses CBP-dependent transcriptional activation apparently by competing with other nuclear factors for binding to CBP. Also acts as a putative regulator of mRNA stability and/or translation rates and mediates mRNA nuclear export. Positively regulates the association of constitutive transport element (CTE)-containing mRNA with large polyribosomes and translation initiation. May not be involved in the nucleocytoplasmic export of unspliced (CTE)-containing RNA species. RNA-binding protein that plays a role in the regulation of alternative splicing and influences mRNA splice site selection and exon inclusion. Binds to RNA containing 5'-[AU]UAA-3' as a bipartite motif spaced by more than 15 nucleotides. Binds poly(A). In cooperation with HNRNPA1 modulates alternative splicing of BCL2L1 by promoting splicing toward isoform Bcl-X(S), and of SMN1. Can regulate CD44 alternative splicing in a Ras pathway-dependent manner. Can regulate alternative splicing of NRXN1 and NRXN3 in the laminin G-like domain 6 containing the evolutionary conserved neurexin alternative spliced segment 4 (AS4) involved in neurexin selective targeting to postsynaptic partners. In a neuronal activity-dependent manner cooperates synergistically with KHDRBS2/SLIM-1 in regulation of NRXN1 exon skipping at AS4. The cooperation with KHDRBS2/SLIM-1 is antagonistic for regulation of NXRN3 alternative splicing at AS4. In Mus musculus (Mouse), this protein is KH domain-containing, RNA-binding, signal transduction-associated protein 1.